A 505-amino-acid chain; its full sequence is Maturase K (505 aa).

This sequence belongs to the intron maturase 2 family. MatK subfamily.

The protein localises to the plastid. It localises to the chloroplast. Usually encoded in the trnK tRNA gene intron. Probably assists in splicing its own and other chloroplast group II introns. The polypeptide is Maturase K (Phaulothamnus spinescens (Snake-eyes)).